We begin with the raw amino-acid sequence, 66 residues long: Gas vesicle protein A (66 aa).

Belongs to the gas vesicle GvpA family. The gas vesicle shell is 2 nm thick and consists of a single layer of this protein. It forms helical ribs nearly perpendicular to the long axis of the vesicle.

It is found in the gas vesicle shell. Gas vesicles are hollow, gas filled proteinaceous nanostructures found in some microorganisms. During planktonic growth they allow positioning of the organism at a favorable depth for light or nutrient acquisition. GvpA forms the protein shell. The polypeptide is Gas vesicle protein A (Thiocapsa pendens (Amoebobacter pendens)).